The primary structure comprises 122 residues: Protein 7a (122 aa).

The signal sequence occupies residues 1–15 (MKIILFLTLIALATC). In terms of domain architecture, X4e spans 16–81 (ELYHYQECVR…RHTYQLRARS (66 aa)). Topologically, residues 16–96 (ELYHYQECVR…FIRQEEVYQE (81 aa)) are virion surface. 2 disulfides stabilise this stretch: Cys-23-Cys-58 and Cys-35-Cys-67. Residues 97–117 (LYSPLFLIVAALVFIILCFTI) form a helical membrane-spanning segment. Residues 118–122 (KRKTE) lie on the Intravirion side of the membrane. Residues 118–122 (KRKTE) carry the Di-lysine motif motif.

In terms of assembly, interacts with the spike glycoprotein, M protein, E protein and the accessory protein 3.

It localises to the virion. Its subcellular location is the host endoplasmic reticulum membrane. The protein resides in the host endoplasmic reticulum-Golgi intermediate compartment membrane. The protein localises to the host Golgi apparatus membrane. Non-structural protein which is dispensable for virus replication in cell culture. The sequence is that of Protein 7a from Bat coronavirus HKU3 (BtCoV).